The following is a 180-amino-acid chain: Acireductone dioxygenase 1 (180 aa).

Residues His82, His84, Glu88, and His127 each coordinate Fe(2+). Residues His82, His84, Glu88, and His127 each contribute to the Ni(2+) site.

Belongs to the acireductone dioxygenase (ARD) family. Fe(2+) is required as a cofactor. The cofactor is Ni(2+).

It localises to the cytoplasm. Its subcellular location is the nucleus. It catalyses the reaction 1,2-dihydroxy-5-(methylsulfanyl)pent-1-en-3-one + O2 = 4-methylsulfanyl-2-oxobutanoate + formate + 2 H(+). It carries out the reaction 1,2-dihydroxy-5-(methylsulfanyl)pent-1-en-3-one + O2 = 3-(methylsulfanyl)propanoate + CO + formate + 2 H(+). It functions in the pathway amino-acid biosynthesis; L-methionine biosynthesis via salvage pathway; L-methionine from S-methyl-5-thio-alpha-D-ribose 1-phosphate: step 5/6. Functionally, catalyzes 2 different reactions between oxygen and the acireductone 1,2-dihydroxy-3-keto-5-methylthiopentene (DHK-MTPene) depending upon the metal bound in the active site. Fe-containing acireductone dioxygenase (Fe-ARD) produces formate and 2-keto-4-methylthiobutyrate (KMTB), the alpha-ketoacid precursor of methionine in the methionine recycle pathway. Ni-containing acireductone dioxygenase (Ni-ARD) produces methylthiopropionate, carbon monoxide and formate, and does not lie on the methionine recycle pathway. The polypeptide is Acireductone dioxygenase 1 (Sorghum bicolor (Sorghum)).